The primary structure comprises 509 residues: Maturase K (509 aa).

It belongs to the intron maturase 2 family. MatK subfamily.

Its subcellular location is the plastid. It is found in the chloroplast. Its function is as follows. Usually encoded in the trnK tRNA gene intron. Probably assists in splicing its own and other chloroplast group II introns. The polypeptide is Maturase K (Galbulimima belgraveana (Northern pigeonberry ash)).